Here is a 122-residue protein sequence, read N- to C-terminus: Large ribosomal subunit protein bL12 (122 aa).

This sequence belongs to the bacterial ribosomal protein bL12 family. In terms of assembly, homodimer. Part of the ribosomal stalk of the 50S ribosomal subunit. Forms a multimeric L10(L12)X complex, where L10 forms an elongated spine to which 2 to 4 L12 dimers bind in a sequential fashion. Binds GTP-bound translation factors.

Functionally, forms part of the ribosomal stalk which helps the ribosome interact with GTP-bound translation factors. Is thus essential for accurate translation. This chain is Large ribosomal subunit protein bL12, found in Clostridium botulinum (strain 657 / Type Ba4).